The sequence spans 115 residues: Large ribosomal subunit protein bL21 (115 aa).

It belongs to the bacterial ribosomal protein bL21 family. As to quaternary structure, part of the 50S ribosomal subunit. Contacts protein L20.

In terms of biological role, this protein binds to 23S rRNA in the presence of protein L20. The protein is Large ribosomal subunit protein bL21 of Coxiella burnetii (strain RSA 331 / Henzerling II).